Reading from the N-terminus, the 714-residue chain is Calpain-1 catalytic subunit (714 aa).

The 300-residue stretch at 55 to 354 (LFRDEAFPPV…FTRLEICNLT (300 aa)) folds into the Calpain catalytic domain. Ca(2+) contacts are provided by Gln-109 and Asp-114. Catalysis depends on residues Cys-115, His-272, and Asn-296. Asp-318 and Asp-323 together coordinate Ca(2+). Thr-354 carries the post-translational modification Phosphothreonine. A domain III region spans residues 355-526 (PDALKSQRVR…KKAGTQELDD (172 aa)). The linker stretch occupies residues 527-542 (QVQAILPDEQVLSEEE). Positions 543–713 (IDENFKALFR…LFKWLQLTMF (171 aa)) are domain IV. EF-hand domains follow at residues 585-618 (FSLE…NRIR), 615-650 (NRIR…AGFK), and 680-714 (VRLE…TMFA). Residues Asp-598, Asp-600, Asn-602, Lys-604, Glu-609, Asp-628, Asp-630, Ser-632, Ser-634, and Glu-639 each contribute to the Ca(2+) site.

Belongs to the peptidase C2 family. Forms a heterodimer with a small (regulatory) subunit CAPNS1. The cofactor is Ca(2+). Post-translationally, undergoes calcium-induced successive autoproteolytic cleavages that generate a membrane-bound 78 kDa active form and an intracellular 75 kDa active form. Calpastatin reduces with high efficiency the transition from 78 kDa to 75 kDa calpain forms.

It localises to the cytoplasm. Its subcellular location is the cell membrane. The enzyme catalyses Broad endopeptidase specificity.. With respect to regulation, activated by micromolar concentrations of calcium and inhibited by calpastatin. In terms of biological role, calcium-regulated non-lysosomal thiol-protease which catalyzes limited proteolysis of substrates involved in cytoskeletal remodeling and signal transduction. Proteolytically cleaves CTBP1. Cleaves and activates caspase-7 (CASP7). The chain is Calpain-1 catalytic subunit from Sus scrofa (Pig).